The following is a 473-amino-acid chain: Proline transporter 1 (473 aa).

Basic and acidic residues predominate over residues 1–11 (MDQHQLDEENQ). The interval 1–31 (MDQHQLDEENQRAALFHSSAPSSSLGADGEE) is disordered. The next 11 membrane-spanning stretches (helical) occupy residues 65–85 (PWYQ…VLGY), 88–108 (SIMV…AAAI), 145–165 (LTWA…IILA), 188–208 (IALS…LSAL), 210–230 (IWLG…FVMS), 252–272 (IFTT…GMLP), 290–310 (LWFQ…MGYW), 333–353 (VANL…ASPM), 378–398 (VGVR…LPFL), 401–421 (FMSL…ANHM), and 437–457 (WHWL…VAAV).

The protein belongs to the amino acid/polyamine transporter 2 family. Amino acid/auxin permease (AAAP) (TC 2.A.18.3) subfamily. Expressed in roots, leaf blades and sheaths, stems and young panicle.

It is found in the cell membrane. Functionally, proline transporter that mediates proline transport across the plasma membrane when expressed in a heterologous system (Xenopus oocytes). The polypeptide is Proline transporter 1 (PROT1) (Oryza sativa subsp. japonica (Rice)).